A 266-amino-acid polypeptide reads, in one-letter code: Type 1 encapsulin shell protein (266 aa).

The protein belongs to the encapsulin family. Family 1 subfamily. As to quaternary structure, homomultimeric. This encapsulin nanocompartment is formed by 60 subunits, and encloses one Dyp homohexamer; partially assembled 58-subunit compartments with and without cargo are also purified. May assemble the shell from dimers. Monomers form pentamers, which assemble to form hollow shells with pores 5-8 Angstroms in diameter where 3 pentamers meet.

Its subcellular location is the encapsulin nanocompartment. Its function is as follows. Shell component of a type 1 encapsulin nanocompartment. Assembles into proteinaceous shells 23-24 nm in diameter with 2-2.5 nm thick walls. Endogenous cargo protein DyP (dye-decolorizing peroxidase) is targeted to the interior via its C-terminal extension; only 1 DyP hexamer is incorporated into each shell. Empty shells can be isolated in the absence of cargo. Cargo encapsulation probably precedes assembly of the nanocompartment; may assemble or disassemble via dimers, subcomplexes with a distinct preference for even numbers of subunits are detected. Nanocompartments are stable against mechanical forces; loaded nanocompartments are less stable than empty ones. Nanocompartments are stable between pH 5-10; they aggregate at pH 9-10 and start to disassemble at pH 11. They are stable in 1M NaCl, 1 M MgCl(2) and 1M CaCl(2), unstable in 20% DMSO (dimethylsulfoxide) and are stable in 20% but not 40% ethanol. The sequence is that of Type 1 encapsulin shell protein from Brevibacterium linens.